The primary structure comprises 131 residues: Small ribosomal subunit protein eS6 (131 aa).

This sequence belongs to the eukaryotic ribosomal protein eS6 family.

The polypeptide is Small ribosomal subunit protein eS6 (Halobacterium salinarum (strain ATCC 29341 / DSM 671 / R1)).